The sequence spans 511 residues: Glutamyl-tRNA(Gln) amidotransferase subunit B, mitochondrial (511 aa).

A mitochondrion-targeting transit peptide spans 1–6 (MLRRYL).

The protein belongs to the GatB/GatE family. GatB subfamily. Subunit of the heterotrimeric GatFAB amidotransferase (AdT) complex, composed of A, B and F subunits.

Its subcellular location is the mitochondrion. The enzyme catalyses L-glutamyl-tRNA(Gln) + L-glutamine + ATP + H2O = L-glutaminyl-tRNA(Gln) + L-glutamate + ADP + phosphate + H(+). Allows the formation of correctly charged Gln-tRNA(Gln) through the transamidation of misacylated Glu-tRNA(Gln) in the mitochondria. The reaction takes place in the presence of glutamine and ATP through an activated gamma-phospho-Glu-tRNA(Gln). The protein is Glutamyl-tRNA(Gln) amidotransferase subunit B, mitochondrial of Lodderomyces elongisporus (strain ATCC 11503 / CBS 2605 / JCM 1781 / NBRC 1676 / NRRL YB-4239) (Yeast).